Consider the following 252-residue polypeptide: Oncostatin-M (252 aa).

An N-terminal signal peptide occupies residues 1–25 (MGVLLTQRTLLSLVLALLFPSMASM). Disulfide bonds link Cys31–Cys152 and Cys74–Cys192. N-linked (GlcNAc...) asparagine glycosylation occurs at Asn100. Disordered regions lie at residues 162 to 184 (TAEP…ASDA) and 213 to 252 (GESP…QLPR). Asn217 carries an N-linked (GlcNAc...) asparagine glycan. The span at 218 to 245 (RSRRHSPHQALRKGVRRTRPSRKGKRLM) shows a compositional bias: basic residues. Positions 222-252 (HSPHQALRKGVRRTRPSRKGKRLMTRGQLPR) are excised as a propeptide.

It belongs to the LIF/OSM family. Propeptide processing is not important for receptor binding activity but may be important growth-inhibitory activity.

Its subcellular location is the secreted. Growth regulator. Inhibits the proliferation of a number of tumor cell lines. Stimulates proliferation of AIDS-KS cells. It regulates cytokine production, including IL-6, G-CSF and GM-CSF from endothelial cells. Uses both type I OSM receptor (heterodimers composed of LIFR and IL6ST) and type II OSM receptor (heterodimers composed of OSMR and IL6ST). Involved in the maturation of fetal hepatocytes, thereby promoting liver development and regeneration. The chain is Oncostatin-M (OSM) from Homo sapiens (Human).